Reading from the N-terminus, the 570-residue chain is Urease subunit alpha (570 aa).

The Urease domain occupies 135 to 570 (GGLDIHVHFN…ELPLAQRYHL (436 aa)). Ni(2+) is bound by residues His140, His142, and Lys219. Lys219 carries the post-translational modification N6-carboxylysine. Substrate is bound at residue His221. 2 residues coordinate Ni(2+): His248 and His274. The Proton donor role is filled by His322. A Ni(2+)-binding site is contributed by Asp362.

It belongs to the metallo-dependent hydrolases superfamily. Urease alpha subunit family. Heterotrimer of UreA (gamma), UreB (beta) and UreC (alpha) subunits. Three heterotrimers associate to form the active enzyme. The cofactor is Ni cation. Post-translationally, carboxylation allows a single lysine to coordinate two nickel ions.

Its subcellular location is the cytoplasm. It carries out the reaction urea + 2 H2O + H(+) = hydrogencarbonate + 2 NH4(+). Its pathway is nitrogen metabolism; urea degradation; CO(2) and NH(3) from urea (urease route): step 1/1. The sequence is that of Urease subunit alpha from Natronomonas pharaonis (strain ATCC 35678 / DSM 2160 / CIP 103997 / JCM 8858 / NBRC 14720 / NCIMB 2260 / Gabara) (Halobacterium pharaonis).